Reading from the N-terminus, the 643-residue chain is Phosphomethylpyrimidine synthase (643 aa).

Substrate-binding positions include asparagine 248, methionine 277, tyrosine 306, histidine 342, 362–364 (SRG), 403–406 (DGLR), and glutamate 442. Histidine 446 lines the Zn(2+) pocket. A substrate-binding site is contributed by tyrosine 469. Position 510 (histidine 510) interacts with Zn(2+). [4Fe-4S] cluster contacts are provided by cysteine 590, cysteine 593, and cysteine 598.

It belongs to the ThiC family. As to quaternary structure, homodimer. [4Fe-4S] cluster serves as cofactor.

The catalysed reaction is 5-amino-1-(5-phospho-beta-D-ribosyl)imidazole + S-adenosyl-L-methionine = 4-amino-2-methyl-5-(phosphooxymethyl)pyrimidine + CO + 5'-deoxyadenosine + formate + L-methionine + 3 H(+). It participates in cofactor biosynthesis; thiamine diphosphate biosynthesis. Functionally, catalyzes the synthesis of the hydroxymethylpyrimidine phosphate (HMP-P) moiety of thiamine from aminoimidazole ribotide (AIR) in a radical S-adenosyl-L-methionine (SAM)-dependent reaction. In Burkholderia orbicola (strain MC0-3), this protein is Phosphomethylpyrimidine synthase.